A 173-amino-acid chain; its full sequence is MAKETGTAKPARQKKEPQPLVIPKNATDEQRLKLERLMRNPDKPATVPERPKEWSPRSAPEFVRDVMGSSAGAGSGEFHVYRHLRRREYQRQEFLDGMSEKQRLDEEYKKKLIQNKMLEEERTAKRRLKRQKLKEKKKMCKKGKKEEKKEDKDGHTDPENSAESSDKSDLEDQ.

2 disordered regions span residues 1–59 (MAKE…PRSA) and 117–173 (MLEE…LEDQ). Residues 26–42 (ATDEQRLKLERLMRNPD) are compositionally biased toward basic and acidic residues. The interval 50 to 142 (RPKEWSPRSA…LKEKKKMCKK (93 aa)) is required for RNA-binding. Residues 99 to 150 (SEKQRLDEEYKKKLIQNKMLEEERTAKRRLKRQKLKEKKKMCKKGKKEEKKE) are a coiled coil. Positions 124–143 (AKRRLKRQKLKEKKKMCKKG) are enriched in basic residues. The interval 125 to 137 (KRRLKRQKLKEKK) is required for nuclear localization. Residues 144–173 (KKEEKKEDKDGHTDPENSAESSDKSDLEDQ) show a composition bias toward basic and acidic residues.

It belongs to the PRKRIP1 family. Component of the pre-catalytic and post-catalytic spliceosome complexes.

The protein localises to the nucleus. It localises to the nucleolus. Required for pre-mRNA splicing as component of the spliceosome. Binds double-stranded RNA. The sequence is that of PRKR-interacting protein 1 homolog (prkrip1) from Xenopus laevis (African clawed frog).